The primary structure comprises 287 residues: Shikimate kinase 3, chloroplastic (287 aa).

Residues 1–57 (MDAGVGLRAKPGAWAGLGNPRRSSTARVPVRFAVEKFAQPLVLGSDRRSCGAKLKVS) constitute a chloroplast transit peptide. Position 98-105 (98-105 (GMMGSGKT)) interacts with ATP. Thr105 serves as a coordination point for Mg(2+). Substrate is bound by residues Asp123, Arg148, and Gly170. Arg209 is an ATP binding site.

This sequence belongs to the shikimate kinase family. Requires Mg(2+) as cofactor. As to expression, expressed in panicles.

The protein localises to the plastid. It localises to the chloroplast. It carries out the reaction shikimate + ATP = 3-phosphoshikimate + ADP + H(+). The protein operates within metabolic intermediate biosynthesis; chorismate biosynthesis; chorismate from D-erythrose 4-phosphate and phosphoenolpyruvate: step 5/7. In terms of biological role, catalyzes the specific phosphorylation of the 3-hydroxyl group of shikimic acid using ATP as a cosubstrate. This Oryza sativa subsp. japonica (Rice) protein is Shikimate kinase 3, chloroplastic (SK3).